The following is a 491-amino-acid chain: Stage IV sporulation protein A (491 aa).

The short motif at G23 to S30 is the Walker A motif; involved in ATP-binding element. Position 23-30 (G23–S30) interacts with ATP. A coiled-coil region spans residues Q334–K362.

As to quaternary structure, interacts (via Walker A motif) with SipL (via C-terminus LysM domain).

It is found in the cytoplasm. It carries out the reaction ATP + H2O = ADP + phosphate + H(+). Functionally, ATPase. Has a role at an early stage in the morphogenesis of the spore coat and is required for proper coat localization to the forespore. In Clostridioides difficile (strain 630) (Peptoclostridium difficile), this protein is Stage IV sporulation protein A.